Here is a 537-residue protein sequence, read N- to C-terminus: Membrane protein insertase YidC (537 aa).

5 helical membrane-spanning segments follow: residues 6–26 (SLLALALLFISFLVYQQWEID), 341–363 (LVSNWGLAIIGVTLVVKAILYPL), 411–431 (LGGCLPLLIQMPIFIALYWTF), 449–469 (LSAQDPYYILPLLMGGSMFLL), and 490–510 (PVIFTVFFLWFPAGLVLYWLV).

Belongs to the OXA1/ALB3/YidC family. Type 1 subfamily. As to quaternary structure, interacts with the Sec translocase complex via SecD. Specifically interacts with transmembrane segments of nascent integral membrane proteins during membrane integration.

Its subcellular location is the cell inner membrane. In terms of biological role, required for the insertion and/or proper folding and/or complex formation of integral membrane proteins into the membrane. Involved in integration of membrane proteins that insert both dependently and independently of the Sec translocase complex, as well as at least some lipoproteins. Aids folding of multispanning membrane proteins. The chain is Membrane protein insertase YidC from Actinobacillus succinogenes (strain ATCC 55618 / DSM 22257 / CCUG 43843 / 130Z).